Here is a 717-residue protein sequence, read N- to C-terminus: Catalase-peroxidase (717 aa).

An N-terminal signal peptide occupies residues 1 to 12 (MTSKGMCPVAHG). A cross-link (tryptophyl-tyrosyl-methioninium (Trp-Tyr) (with M-247)) is located at residues 93–221 (WHSAGSYRIA…LAAVMMGLIY (129 aa)). Residue His94 is the Proton acceptor of the active site. The tryptophyl-tyrosyl-methioninium (Tyr-Met) (with W-93) cross-link spans 221–247 (YVNPEGVDGKPDPLKTAQDMRVTFARM). Heme b is bound at residue His262.

The protein belongs to the peroxidase family. Peroxidase/catalase subfamily. Homodimer or homotetramer. It depends on heme b as a cofactor. Post-translationally, formation of the three residue Trp-Tyr-Met cross-link is important for the catalase, but not the peroxidase activity of the enzyme.

The catalysed reaction is H2O2 + AH2 = A + 2 H2O. It carries out the reaction 2 H2O2 = O2 + 2 H2O. Functionally, bifunctional enzyme with both catalase and broad-spectrum peroxidase activity. The chain is Catalase-peroxidase from Polynucleobacter asymbioticus (strain DSM 18221 / CIP 109841 / QLW-P1DMWA-1) (Polynucleobacter necessarius subsp. asymbioticus).